Reading from the N-terminus, the 95-residue chain is Co-chaperonin GroES (95 aa).

It belongs to the GroES chaperonin family. As to quaternary structure, heptamer of 7 subunits arranged in a ring. Interacts with the chaperonin GroEL.

It is found in the cytoplasm. In terms of biological role, together with the chaperonin GroEL, plays an essential role in assisting protein folding. The GroEL-GroES system forms a nano-cage that allows encapsulation of the non-native substrate proteins and provides a physical environment optimized to promote and accelerate protein folding. GroES binds to the apical surface of the GroEL ring, thereby capping the opening of the GroEL channel. In Ruthia magnifica subsp. Calyptogena magnifica, this protein is Co-chaperonin GroES.